Consider the following 282-residue polypeptide: Pantothenate synthetase (282 aa).

Position 30–37 (30–37 (MGALHAGH)) interacts with ATP. His-37 (proton donor) is an active-site residue. Gln-61 lines the (R)-pantoate pocket. A beta-alanine-binding site is contributed by Gln-61. 147–150 (GEKD) is an ATP binding site. Gln-153 is a (R)-pantoate binding site. ATP-binding positions include Val-176 and 184 to 187 (LSSR).

The protein belongs to the pantothenate synthetase family. As to quaternary structure, homodimer.

Its subcellular location is the cytoplasm. It carries out the reaction (R)-pantoate + beta-alanine + ATP = (R)-pantothenate + AMP + diphosphate + H(+). Its pathway is cofactor biosynthesis; (R)-pantothenate biosynthesis; (R)-pantothenate from (R)-pantoate and beta-alanine: step 1/1. Its function is as follows. Catalyzes the condensation of pantoate with beta-alanine in an ATP-dependent reaction via a pantoyl-adenylate intermediate. The protein is Pantothenate synthetase of Bacteroides thetaiotaomicron (strain ATCC 29148 / DSM 2079 / JCM 5827 / CCUG 10774 / NCTC 10582 / VPI-5482 / E50).